A 332-amino-acid chain; its full sequence is Junctional sarcoplasmic reticulum protein 1 (332 aa).

The tract at residues 1 to 80 (MTTRGLEDLD…EKELAGKEST (80 aa)) is mediates interaction with CACNA1S. Disordered stretches follow at residues 1–125 (MTTR…PWGD) and 159–332 (APHP…KGRD). At Thr51 the chain carries Phosphothreonine. Basic and acidic residues predominate over residues 66 to 76 (GLKKMEKELAG). Composition is skewed to pro residues over residues 98 to 116 (QAPP…PPRT) and 177 to 197 (APKP…PGPP). Residues 221–232 (GGSISEASGEES) show a composition bias toward low complexity. Ser223 and Ser228 each carry phosphoserine. Basic and acidic residues-rich tracts occupy residues 239 to 256 (GSQE…EKLK) and 283 to 307 (RRWE…EHGK).

As to quaternary structure, interacts with CACNA1S, CACNB1 and calsequestrin. In terms of tissue distribution, specifically expressed in skeletal muscle. Detected in skeletal muscle and tongue (at protein level).

It is found in the sarcoplasmic reticulum membrane. The protein localises to the endoplasmic reticulum membrane. Its function is as follows. Involved in skeletal muscle excitation/contraction coupling (EC), probably acting as a regulator of the voltage-sensitive calcium channel CACNA1S. EC is a physiological process whereby an electrical signal (depolarization of the plasma membrane) is converted into a chemical signal, a calcium gradient, by the opening of ryanodine receptor calcium release channels. May regulate CACNA1S membrane targeting and activity. This is Junctional sarcoplasmic reticulum protein 1 (Jsrp1) from Mus musculus (Mouse).